The primary structure comprises 196 residues: Putative NADH dehydrogenase/NAD(P)H nitroreductase Smal_0358 (196 aa).

It belongs to the nitroreductase family. HadB/RutE subfamily. FMN is required as a cofactor.

The sequence is that of Putative NADH dehydrogenase/NAD(P)H nitroreductase Smal_0358 from Stenotrophomonas maltophilia (strain R551-3).